We begin with the raw amino-acid sequence, 151 residues long: Lipoprotein signal peptidase (151 aa).

2 consecutive transmembrane segments (helical) span residues 54-74 and 83-103; these read GQMW…IYLI and LLKI…IDRL. Catalysis depends on residues Asp110 and Asp125. Residues 120 to 140 form a helical membrane-spanning segment; sequence IFNIADSALTIGVGLFLLNIL.

It belongs to the peptidase A8 family.

The protein localises to the cell membrane. The catalysed reaction is Release of signal peptides from bacterial membrane prolipoproteins. Hydrolyzes -Xaa-Yaa-Zaa-|-(S,diacylglyceryl)Cys-, in which Xaa is hydrophobic (preferably Leu), and Yaa (Ala or Ser) and Zaa (Gly or Ala) have small, neutral side chains.. Its pathway is protein modification; lipoprotein biosynthesis (signal peptide cleavage). Its function is as follows. This protein specifically catalyzes the removal of signal peptides from prolipoproteins. The chain is Lipoprotein signal peptidase from Shouchella clausii (strain KSM-K16) (Alkalihalobacillus clausii).